Here is a 196-residue protein sequence, read N- to C-terminus: T-cell surface glycoprotein CD3 epsilon chain (196 aa).

An N-terminal signal peptide occupies residues 1–21; it reads MPSGNLWKVLGLCLLSVGAWG. Residues 22-116 are Extracellular-facing; sequence QEDIERPDED…VCENCVEVDL (95 aa). An Ig-like domain is found at 28–102; the sequence is PDEDTQKTFK…VGEKTSHRLY (75 aa). The cysteines at positions 49 and 91 are disulfide-linked. The chain crosses the membrane as a helical span at residues 117–137; that stretch reads MAVVTIIVVDICITLGLLMVV. Over 138–196 the chain is Cytoplasmic; the sequence is YYYSKSRKAKAMPVTRGAGAGGRPRGQNRERPPPVPNPDYEPIRKGQRDLYSGLNQRGR. Positions 150-196 are disordered; that stretch reads PVTRGAGAGGRPRGQNRERPPPVPNPDYEPIRKGQRDLYSGLNQRGR. The tract at residues 164 to 181 is NUMB-binding region; the sequence is QNRERPPPVPNPDYEPIR. Residues 167–194 form the ITAM domain; the sequence is ERPPPVPNPDYEPIRKGQRDLYSGLNQR. A proline-rich sequence region spans residues 168–175; sequence RPPPVPNP. Phosphotyrosine occurs at positions 177 and 188.

In terms of assembly, the TCR-CD3 complex is composed of a CD3D/CD3E and a CD3G/CD3E heterodimers that preferentially associate with TCRalpha and TCRbeta, respectively, to form TCRalpha/CD3E/CD3G and TCRbeta/CD3G/CD3E trimers. In turn, the hexamer interacts with CD3Z homodimer to form the TCR-CD3 complex. Alternatively, TCRalpha and TCRbeta can be replaced by TCRgamma and TCRdelta. Interacts with CD6. Interacts (via Proline-rich sequence) with NCK1; the interaction is ligand dependent but independent of tyrosine kinase activation. In terms of processing, phosphorylated on Tyr residues after T-cell receptor triggering by LCK in association with CD4/CD8.

The protein localises to the cell membrane. Part of the TCR-CD3 complex present on T-lymphocyte cell surface that plays an essential role in adaptive immune response. When antigen presenting cells (APCs) activate T-cell receptor (TCR), TCR-mediated signals are transmitted across the cell membrane by the CD3 chains CD3D, CD3E, CD3G and CD3Z. All CD3 chains contain immunoreceptor tyrosine-based activation motifs (ITAMs) in their cytoplasmic domain. Upon TCR engagement, these motifs become phosphorylated by Src family protein tyrosine kinases LCK and FYN, resulting in the activation of downstream signaling pathways. In addition of this role of signal transduction in T-cell activation, CD3E plays an essential role in correct T-cell development. Also participates in internalization and cell surface down-regulation of TCR-CD3 complexes via endocytosis sequences present in CD3E cytosolic region. In addition to its role as a TCR coreceptor, it serves as a receptor for ITPRIPL1. Ligand recognition inhibits T-cell activation by promoting interaction with NCK1, which prevents CD3E-ZAP70 interaction and blocks the ERK-NFkB signaling cascade and calcium influx. The sequence is that of T-cell surface glycoprotein CD3 epsilon chain (CD3E) from Sus scrofa (Pig).